A 236-amino-acid polypeptide reads, in one-letter code: uncharacterized protein (236 aa).

The 44-residue stretch at 117-160 (RYLSKQTDRNEFITTAESYIGISKHKSTNITYKLPLKEQFCNMS) folds into the RPE1 insert domain.

This is an uncharacterized protein from Rickettsia prowazekii (strain Madrid E).